We begin with the raw amino-acid sequence, 893 residues long: UPF0182 protein CLB_0018 (893 aa).

The next 7 helical transmembrane spans lie at 9–29 (IPLF…NFII), 49–69 (AIII…WMYY), 94–114 (LFFI…SSSY), 154–174 (VIIS…FILE), 202–222 (LAIV…IKIW), 246–266 (FYKI…LSIV), and 273–293 (VSIC…ASFL).

Belongs to the UPF0182 family.

It is found in the cell membrane. In Clostridium botulinum (strain ATCC 19397 / Type A), this protein is UPF0182 protein CLB_0018.